The following is a 244-amino-acid chain: 7-cyano-7-deazaguanine synthase (244 aa).

14 to 24 (FSGGQDSATCV) contacts ATP. Residues Cys-202, Cys-217, Cys-220, and Cys-223 each coordinate Zn(2+).

This sequence belongs to the QueC family. Zn(2+) serves as cofactor.

The catalysed reaction is 7-carboxy-7-deazaguanine + NH4(+) + ATP = 7-cyano-7-deazaguanine + ADP + phosphate + H2O + H(+). It functions in the pathway purine metabolism; 7-cyano-7-deazaguanine biosynthesis. In terms of biological role, catalyzes the ATP-dependent conversion of 7-carboxy-7-deazaguanine (CDG) to 7-cyano-7-deazaguanine (preQ(0)). The polypeptide is 7-cyano-7-deazaguanine synthase (Burkholderia vietnamiensis (strain G4 / LMG 22486) (Burkholderia cepacia (strain R1808))).